A 506-amino-acid chain; its full sequence is Histidine--tRNA ligase (506 aa).

The protein belongs to the class-II aminoacyl-tRNA synthetase family. Homodimer.

The protein resides in the cytoplasm. It carries out the reaction tRNA(His) + L-histidine + ATP = L-histidyl-tRNA(His) + AMP + diphosphate + H(+). This is Histidine--tRNA ligase (hisS) from Bradyrhizobium diazoefficiens (strain JCM 10833 / BCRC 13528 / IAM 13628 / NBRC 14792 / USDA 110).